The sequence spans 246 residues: 3'(2'),5'-bisphosphate nucleotidase CysQ (246 aa).

Mg(2+) is bound by residues Glu64, Asp83, Leu85, Asp86, and Asp205. A substrate-binding site is contributed by Glu64. Residues 85–88 (LDGT) and Asp205 contribute to the substrate site.

It belongs to the inositol monophosphatase superfamily. CysQ family. Requires Mg(2+) as cofactor.

The protein localises to the cell inner membrane. It carries out the reaction adenosine 3',5'-bisphosphate + H2O = AMP + phosphate. With respect to regulation, inhibited by lithium and calcium. In terms of biological role, converts adenosine-3',5'-bisphosphate (PAP) to AMP. May also convert adenosine 3'-phosphate 5'-phosphosulfate (PAPS) to adenosine 5'-phosphosulfate (APS). Has 10000-fold lower activity towards inositol 1,4-bisphosphate (Ins(1,4)P2). This is 3'(2'),5'-bisphosphate nucleotidase CysQ from Escherichia coli (strain K12).